A 211-amino-acid chain; its full sequence is FMN-dependent NADH:quinone oxidoreductase (211 aa).

Residues 17–19 (SYS) and 102–105 (MWNF) each bind FMN.

It belongs to the azoreductase type 1 family. Homodimer. FMN is required as a cofactor.

The enzyme catalyses 2 a quinone + NADH + H(+) = 2 a 1,4-benzosemiquinone + NAD(+). It carries out the reaction N,N-dimethyl-1,4-phenylenediamine + anthranilate + 2 NAD(+) = 2-(4-dimethylaminophenyl)diazenylbenzoate + 2 NADH + 2 H(+). Its function is as follows. Quinone reductase that provides resistance to thiol-specific stress caused by electrophilic quinones. Functionally, also exhibits azoreductase activity. Catalyzes the reductive cleavage of the azo bond in aromatic azo compounds to the corresponding amines. The polypeptide is FMN-dependent NADH:quinone oxidoreductase (Geobacillus kaustophilus (strain HTA426)).